The sequence spans 254 residues: Alcohol dehydrogenase (254 aa).

Residue 10 to 33 (FVAGLGGIGLDTSREIVKSGPKNL) participates in NAD(+) binding. Residue serine 138 coordinates substrate. Tyrosine 151 serves as the catalytic Proton acceptor.

It belongs to the short-chain dehydrogenases/reductases (SDR) family. Homodimer.

The enzyme catalyses a primary alcohol + NAD(+) = an aldehyde + NADH + H(+). It catalyses the reaction a secondary alcohol + NAD(+) = a ketone + NADH + H(+). In Drosophila picticornis (Fruit fly), this protein is Alcohol dehydrogenase (Adh).